A 648-amino-acid polypeptide reads, in one-letter code: Macrolide export ATP-binding/permease protein MacB (648 aa).

Residues 5-243 (LELCNVSRSY…QGVDAAVVNT (239 aa)) form the ABC transporter domain. 41–48 (GVSGSGKS) serves as a coordination point for ATP. 5 helical membrane-spanning segments follow: residues 273 to 293 (LLTMLGIIIGIASVVSIVVVG), 417 to 437 (ANVVGEVVLAGNMPVIVIGVA), 523 to 543 (LFLTLVAVISLVVGGIGVMNI), 577 to 597 (VLVCLVGGALGISLSMFIAFM), and 611 to 631 (LTALASAFLCSTFTGILFGWL).

Belongs to the ABC transporter superfamily. Macrolide exporter (TC 3.A.1.122) family. In terms of assembly, homodimer. Part of the tripartite efflux system MacAB-TolC, which is composed of an inner membrane transporter, MacB, a periplasmic membrane fusion protein, MacA, and an outer membrane component, TolC. The complex forms a large protein conduit and can translocate molecules across both the inner and outer membranes. Interacts with MacA.

The protein localises to the cell inner membrane. In terms of biological role, part of the tripartite efflux system MacAB-TolC. MacB is a non-canonical ABC transporter that contains transmembrane domains (TMD), which form a pore in the inner membrane, and an ATP-binding domain (NBD), which is responsible for energy generation. Confers resistance against macrolides. This chain is Macrolide export ATP-binding/permease protein MacB, found in Salmonella choleraesuis (strain SC-B67).